The primary structure comprises 154 residues: Ribosome maturation factor RimP (154 aa).

It belongs to the RimP family.

Its subcellular location is the cytoplasm. In terms of biological role, required for maturation of 30S ribosomal subunits. This is Ribosome maturation factor RimP from Prochlorococcus marinus (strain MIT 9303).